The sequence spans 89 residues: Small ribosomal subunit protein uS15 (89 aa).

The protein belongs to the universal ribosomal protein uS15 family. Part of the 30S ribosomal subunit. Forms a bridge to the 50S subunit in the 70S ribosome, contacting the 23S rRNA.

Its function is as follows. One of the primary rRNA binding proteins, it binds directly to 16S rRNA where it helps nucleate assembly of the platform of the 30S subunit by binding and bridging several RNA helices of the 16S rRNA. In terms of biological role, forms an intersubunit bridge (bridge B4) with the 23S rRNA of the 50S subunit in the ribosome. The polypeptide is Small ribosomal subunit protein uS15 (Synechococcus elongatus (strain ATCC 33912 / PCC 7942 / FACHB-805) (Anacystis nidulans R2)).